The chain runs to 686 residues: MSKNNTMTSAVSDMLSQQQLNLQHLHNLQQHTRSMTSADHANVLQQQQQQQQQQQQQQQQQQQSASFQNGSLTSDINQQSYLNGQPVPSTSNSTFQNNRTLTMNSGGLQGIISNGSPNIDSNTNVTIAVPDPNNNNGKQLQGKNSLTNTSILSRARSSLQRQRLAQQQQQQQDPRSPLVILVPTAAQPTDILAARFSAWRNVIKSVIVYLTEIASIQDEIVRQQLRLSHAVQFPFFSIENQYQPSSQEDKSVQKFFLPLGNGSIQDLPTILNQYHESLASSASKASRELTNDVIPRLEDLRRDLIVKIKEIKSLQSDFKNSCSKELQQTKQAMKQFQESLKDARYSVPKQDPFLTKLALDRQIKKQLQEENFLHEAFDNLETSGAELEKIVVMEIQNSLTIYARLLGQEAQLVFDILISKLDSGFFNVDPQFEWDNFISRDPNFLLPNLPMRTFKEIVYKYQFDPLTYEIKSGFLERRSKFLKSYSKGYYVLTPNFLHEFKTADRKKDLVPVMSLALSECTVTEHSRKNSTSSPNSTGSDAKFVLHAKQNGIIRRGHNWVFKADSYESMMSWFDNLKILTSTSNIQDKYKFITQKLNLNSDGKPKLTNNHTSINKYQLSNANSTMVENDENDDINSNYVGSTVTPKLDNQTNTNTSMSSLPDTNDSELQDQVPNIYIQTPINDFKS.

The segment at 33–147 (RSMTSADHAN…KQLQGKNSLT (115 aa)) is disordered. Positions 45–63 (QQQQQQQQQQQQQQQQQQQ) are enriched in low complexity. Over residues 64 to 126 (SASFQNGSLT…PNIDSNTNVT (63 aa)) the composition is skewed to polar residues. A compositionally biased stretch (low complexity) spans 133–144 (NNNNGKQLQGKN). Ser-145, Ser-150, and Ser-153 each carry phosphoserine. Residues 157 to 172 (SSLQRQRLAQQQQQQQ) are compositionally biased toward low complexity. Residues 157–176 (SSLQRQRLAQQQQQQQDPRS) form a disordered region. A coiled-coil region spans residues 296–381 (RLEDLRRDLI…FLHEAFDNLE (86 aa)). Residues 468–581 (YEIKSGFLER…WFDNLKILTS (114 aa)) form the PH domain. A disordered region spans residues 626 to 669 (VENDENDDINSNYVGSTVTPKLDNQTNTNTSMSSLPDTNDSELQ). The segment covering 634–663 (INSNYVGSTVTPKLDNQTNTNTSMSSLPDT) has biased composition (polar residues). The short motif at 673–678 (PNIYIQ) is the PXIXIT-like, required for interaction with CNA1 and CNA2, and calcineurin-dependent dephosphorylation element.

As to quaternary structure, heterodimer of SLM1-SLM2. Binds phosphatidylinositol 4,5-bisphosphate, which is required for function. Interacts with the TORC2 subunits AVO2, BIT61 and TOR2. Interacts with the calcineurin catalytic subunits CNA1 and CNA2. Phosphorylated by the target of rapamycin complex 2 (TORC2) and dephosphorylated by serine/threonine-protein phosphatase 2B (calcineurin). Dephosphorylated in response to the disruption or inhibition of sphingolipid synthesis.

It is found in the cell membrane. Together with SLM2, acts as an effector of the TORC2- and calcineurin-signaling pathways. Phosphorylated and activated by TORC2 under favorable growth conditions. Mediates actin polarization via inhibition of calcineurin-dependent transcription. Upon nutrient limitation or environmental stress, gets dephosphorylated by calcineurin. Dephosphorylation inhibits its interaction with TORC2, thereby antagonizing TORC2 signaling and mediating calcineurin-dependent actin depolarization. May play a role in the response to the disruption of sphingolipid synthesis, where dephosphorylation of SLM1 leads to the activation and phosphorylation of YPK1 through the TORC2 and PKH1 pathways, which in turn phosphorylates ORM1 and LAG1 to activate sphingolipid synthesis. Also functions in heat-induced, calcineurin-mediated uracil permease (FUR4) endocytosis. The chain is Phosphatidylinositol 4,5-bisphosphate-binding protein SLM1 (SLM1) from Saccharomyces cerevisiae (strain ATCC 204508 / S288c) (Baker's yeast).